A 1311-amino-acid polypeptide reads, in one-letter code: Zinc finger protein 423 (1311 aa).

Positions 1 to 11 are enriched in basic residues; that stretch reads MSRRKQAKPRS. 3 disordered regions span residues 1–21, 34–70, and 95–123; these read MSRRKQAKPRSVKVEEGEASD, GGLEGESECDRKSSRALEDRNSVTSQEERNEDDEDVE, and AHRCPGDGDDDPQLSWVASSPSSKDVASP. Positions 41-54 are enriched in basic and acidic residues; that stretch reads ECDRKSSRALEDRN. 2 positions are modified to phosphoserine: Ser-55 and Ser-58. The C2H2-type 1; degenerate zinc-finger motif lies at 75 to 101; sequence YTCDHCQQDFESLADLTDHRAHRCPGD. Residues 110–123 show a composition bias toward polar residues; the sequence is WVASSPSSKDVASP. 7 consecutive C2H2-type zinc fingers follow at residues 146-168, 174-196, 202-224, 230-252, 271-294, 303-326, and 331-353; these read YPCQFCDKSFIRLSYLKRHEQIH, FKCTFCSRLFKHKRSRDRHIKLH, YHCHECEAAFSRRDHLKIHLKTH, FKCSVCKRGFSSTSSLQSHMQAH, FMCDYCEDTFSQTEELEKHVLTLH, LQCIHCPEVFVDESTLLAHIHQAH, and HKCPMCPEQFSSVEGVYCHLDSH. Residues 354-426 are disordered; the sequence is RQPDSSNHSV…PLRGQKKMRD (73 aa). A compositionally biased stretch (polar residues) spans 373–382; sequence ASMSSATPDS. A compositionally biased stretch (low complexity) spans 390-404; sequence SVASMSSATPDSSAS. The C2H2-type 9; degenerate zinc finger occupies 436-460; sequence YSCPYCSKRDFTSLAVLEIHLKTIH. 3 consecutive C2H2-type zinc fingers follow at residues 468-491, 507-530, and 544-567; these read HTCQICLDSMPTLYNLNEHVRKLH, FHCNYCPEMFADINSLQEHIRVSH, and FFCNQCSMGFLTESSLTEHIQQAH. Residues 590-615 form a C2H2-type 13; atypical zinc finger; that stretch reads YSCPYCTNSPIFGSILKLTKHIKENH. The tract at residues 617-654 is disordered; the sequence is NIPLAHSKKSKAEQSPVSSDVEVSSPKRQRLSGSANSI. Ser-631 is subject to Phosphoserine. Low complexity predominate over residues 631-642; that stretch reads SPVSSDVEVSSP. 7 consecutive C2H2-type zinc fingers follow at residues 659–681, 689–711, 719–742, 747–770, 777–800, 808–830, and 834–857; these read YPCNQCDLKFSNFESFQTHLKLH, QACPQCKEDFDSQESLLQHLTVH, YVCESCDKQFSSVDDLQKHLLDMH, YHCTLCQEVFDSKVSIQVHLAVKH, YRCTACNWDFRKEADLQVHVKHSH, HKCIFCGETFSTEVELQCHITTH, and YNCRFCSKAFHAVLLLEKHLREKH. The segment at 913–935 adopts a C2H2-type 21; degenerate zinc-finger fold; it reads YGCDICGAAYTMEVLLQNHRLRD. 3 C2H2-type zinc fingers span residues 957-979, 986-1008, and 1047-1069; these read HKCNVCSRTFFSENGLREHLQTH, YMCPICGERFPSLLTLTEHKVTH, and FRCVVCMQTVTSTLELKIHGTFH. At Ser-1081 the chain carries Phosphoserine. Residues 1091 to 1109 form a C2H2-type 25; degenerate zinc finger; that stretch reads YKCALCLKEFRSKQDLVRL. C2H2-type zinc fingers lie at residues 1147–1170, 1195–1217, 1225–1247, 1256–1279, and 1286–1309; these read LRCPECNVKFESAEDLESHMQVDH, YQCIKCQMTFENEREIQIHVANH, HECKLCNQMFDSPAKLLCHLIEH, FKCPVCFTVFVQANKLQQHIFAVH, and YDCSQCPQKFFFQTELQNHTMSQH. The segment covering 1163 to 1174 has biased composition (basic and acidic residues); that stretch reads ESHMQVDHRDLT. A disordered region spans residues 1163–1190; that stretch reads ESHMQVDHRDLTPETSGPRKGAQTSPVP.

The protein belongs to the krueppel C2H2-type zinc-finger protein family. Homodimer. Interacts with PARP1, SMAD1 and SMAD4. Interacts with EBF1. Interacts with CEP290. Expressed in brain, eye, olfactory epithelium, spleen and heart. Expressed in the basal layer, consisting of neural precursor cells and immature sensory neurons of the olfactory epithelium, but not in the mature receptor cells.

The protein resides in the nucleus. Its function is as follows. Transcription factor that can both act as an activator or a repressor depending on the context. Plays a central role in BMP signaling and olfactory neurogenesis. Associates with SMADs in response to BMP2 leading to activate transcription of BMP target genes. Acts as a transcriptional repressor via its interaction with EBF1, a transcription factor involved in terminal olfactory receptor neurons differentiation; this interaction preventing EBF1 to bind DNA and activate olfactory-specific genes. Involved in olfactory neurogenesis by participating in a developmental switch that regulates the transition from differentiation to maturation in olfactory receptor neurons. Controls proliferation and differentiation of neural precursors in cerebellar vermis formation. This chain is Zinc finger protein 423 (Znf423), found in Rattus norvegicus (Rat).